Consider the following 98-residue polypeptide: ESAT-6-like protein EsxK (98 aa).

The protein belongs to the WXG100 family. CFP-10 subfamily. As to quaternary structure, strongly interacts with EsxL to form a heterodimeric complex under reducing conditions.

Its subcellular location is the secreted. The polypeptide is ESAT-6-like protein EsxK (Mycobacterium tuberculosis (strain CDC 1551 / Oshkosh)).